Reading from the N-terminus, the 72-residue chain is Cytochrome c oxidase subunit 8C, mitochondrial (72 aa).

The transit peptide at 1–29 directs the protein to the mitochondrion; that stretch reads MSRLLLLCSSLLRHRAVLFSKPGHPGRLS. Topologically, residues 30-40 are mitochondrial matrix; it reads HSESPQKKILS. A helical membrane pass occupies residues 41 to 64; sequence PTESAVGIVVFFTTFYIPAAYVLS. Topologically, residues 65-72 are mitochondrial intermembrane; it reads SLKYFKGE.

This sequence belongs to the cytochrome c oxidase VIII family. In terms of assembly, component of the cytochrome c oxidase (complex IV, CIV), a multisubunit enzyme composed of 14 subunits. The complex is composed of a catalytic core of 3 subunits MT-CO1, MT-CO2 and MT-CO3, encoded in the mitochondrial DNA, and 11 supernumerary subunits COX4I, COX5A, COX5B, COX6A, COX6B, COX6C, COX7A, COX7B, COX7C, COX8 and NDUFA4, which are encoded in the nuclear genome. The complex exists as a monomer or a dimer and forms supercomplexes (SCs) in the inner mitochondrial membrane with NADH-ubiquinone oxidoreductase (complex I, CI) and ubiquinol-cytochrome c oxidoreductase (cytochrome b-c1 complex, complex III, CIII), resulting in different assemblies (supercomplex SCI(1)III(2)IV(1) and megacomplex MCI(2)III(2)IV(2)).

It localises to the mitochondrion inner membrane. The protein operates within energy metabolism; oxidative phosphorylation. Functionally, component of the cytochrome c oxidase, the last enzyme in the mitochondrial electron transport chain which drives oxidative phosphorylation. The respiratory chain contains 3 multisubunit complexes succinate dehydrogenase (complex II, CII), ubiquinol-cytochrome c oxidoreductase (cytochrome b-c1 complex, complex III, CIII) and cytochrome c oxidase (complex IV, CIV), that cooperate to transfer electrons derived from NADH and succinate to molecular oxygen, creating an electrochemical gradient over the inner membrane that drives transmembrane transport and the ATP synthase. Cytochrome c oxidase is the component of the respiratory chain that catalyzes the reduction of oxygen to water. Electrons originating from reduced cytochrome c in the intermembrane space (IMS) are transferred via the dinuclear copper A center (CU(A)) of subunit 2 and heme A of subunit 1 to the active site in subunit 1, a binuclear center (BNC) formed by heme A3 and copper B (CU(B)). The BNC reduces molecular oxygen to 2 water molecules using 4 electrons from cytochrome c in the IMS and 4 protons from the mitochondrial matrix. The polypeptide is Cytochrome c oxidase subunit 8C, mitochondrial (Cox8c) (Mus musculus (Mouse)).